A 708-amino-acid chain; its full sequence is Outer capsid protein mu-1 (708 aa).

G2 carries N-myristoyl glycine; by host lipidation. N3, N12, N81, N110, N458, N482, N528, and N659 each carry an N-linked (GlcNAc...) asparagine; by host glycan. The tract at residues 675–708 (PKPDCPTSGDSGESSNRRVKRDSYAGVVKRGYTR) is disordered.

Belongs to the orthoreovirus mu-1 protein family. Heterohexamer of three sigma-3 and three Mu-1 proteins. Cleaved during the endosomal proteolytic disassembly of the outer capsid. Mu-1 is proteolytically cleaved into mu-1N and mu-1C during the maturation step to generate the ISVP. Cleavage of mu-1 to mu-1C is dependent on myristoylation and binding to sigma-3 protein. Mu-1C is further cleaved into delta (59 kDa), and phi (13 kDa) segments during entry into the host cell cytoplasm. In terms of processing, mu-1 and mu-1N are N-terminally myristoylated. This acylation is essential for the membrane fusion activity.

The protein resides in the virion. It is found in the host cell membrane. It localises to the host endoplasmic reticulum. The protein localises to the host mitochondrion. Functionally, major outer capsid protein involved in host cell membrane penetration. In the endocytic compartment, outer-capsid protein sigma-3 is removed by cathepsin proteases, which exposes the viral membrane-penetration protein mu-1. Both myristoylated peptides mu-1N and phi are released during infectious subvirion particles (ISVP) formation in the endosome. They associate with host membranes and mu-1N induces permeabilization and delivery of transcriptionally active viral particles into the host cell cytoplasm. Seems to induce apoptosis in the host cell. Its function is as follows. The viral outer shell polypeptides, of which mu-1 is one, impose structural constraints that prevent elongation of nascent transcripts by the RNA-dependent RNA polymerase lambda-3. The sequence is that of Outer capsid protein mu-1 (M2) from Mammalia (T3D).